We begin with the raw amino-acid sequence, 391 residues long: uncharacterized protein (391 aa).

The protein belongs to the mycobacterial PPE family.

This is an uncharacterized protein from Mycobacterium tuberculosis (strain CDC 1551 / Oshkosh).